The following is a 479-amino-acid chain: MDMNMDGKTVIVAGLGVSGQSMMEVLGSRAGRVLGVDEKKPDADLHSFDQIDWDNTDMVMTSPVFNPRTPFILEAQKRNIPVMSEVELAWQLRVNSNTTGKPAQWIGITGTNGKTSTTEMTSEMLTACGLAAPAVGNIGKAVSHAAVDPANDVLCVELSSFQLHFTYSLELDCAAITNIADDHLDWHGGIENYAADKAKVFHNVKKALVYNADDERVTKLAFAAQTAPECRRIGFTLAEPKDGQIGVKDGWIVDMSGIAGGEAGKPFQVAKVTDFTHLTEPDGTVYPHLLADALTALALVLGLGADKDKALAALKQFTPGGHRIQTVAVAKTSDGGTIRFVDDSKATNAHAAKASLNSFADKSVVWIAGGLAKGSRFEQLVADQARTIKAAIIIGKDQQPMLDAFKASAPDIPMSIIDPTDNDTVMARAIDAAGTYAQSGDVVLMAPACASMDQFKSYADRGNQFAQQAQRWVNEHGEA.

110 to 116 (GTNGKTS) is a binding site for ATP.

Belongs to the MurCDEF family.

The protein resides in the cytoplasm. It carries out the reaction UDP-N-acetyl-alpha-D-muramoyl-L-alanine + D-glutamate + ATP = UDP-N-acetyl-alpha-D-muramoyl-L-alanyl-D-glutamate + ADP + phosphate + H(+). It participates in cell wall biogenesis; peptidoglycan biosynthesis. Its function is as follows. Cell wall formation. Catalyzes the addition of glutamate to the nucleotide precursor UDP-N-acetylmuramoyl-L-alanine (UMA). This is UDP-N-acetylmuramoylalanine--D-glutamate ligase from Bifidobacterium adolescentis (strain ATCC 15703 / DSM 20083 / NCTC 11814 / E194a).